A 366-amino-acid polypeptide reads, in one-letter code: Galactoside alpha-(1,2)-fucosyltransferase 1 (366 aa).

Residues 1-8 are Cytoplasmic-facing; it reads MWPPSHRQ. The helical; Signal-anchor for type II membrane protein transmembrane segment at 9–25 threads the bilayer; that stretch reads LCRAFLLVCVFSVISFF. Over 26–366 the chain is Lumenal; it reads LHIHQDSFPH…LSPLWTLAKP (341 aa). N-linked (GlcNAc...) asparagine glycosylation is found at asparagine 66, asparagine 302, and asparagine 328.

Belongs to the glycosyltransferase 11 family.

The protein localises to the golgi apparatus. It localises to the golgi stack membrane. It carries out the reaction a beta-D-galactosyl-(1-&gt;4)-N-acetyl-beta-D-glucosaminyl derivative + GDP-beta-L-fucose = an alpha-L-Fuc-(1-&gt;2)-beta-D-Gal-(1-&gt;4)-beta-D-GlcNAc derivative + GDP + H(+). It catalyses the reaction a ganglioside GA1 + GDP-beta-L-fucose = a ganglioside Fuc-GA1 + GDP + H(+). The catalysed reaction is a beta-D-Gal-(1-&gt;3)-beta-D-GlcNAc-(1-&gt;3)-beta-D-Gal-(1-&gt;4)-beta-D-Glc-(1&lt;-&gt;1')-Cer(d18:1(4E)) + GDP-beta-L-fucose = alpha-L-fucosyl-(1-&gt;2)- beta-D-galactosyl-(1-&gt;3)-N-acetyl-beta-D-glucosaminyl-(1-&gt;3)-beta-D-galactosyl-(1-&gt;4)-beta-D-glucosyl-(1&lt;-&gt;1')-N-acylsphing-4-enine + GDP + H(+). The enzyme catalyses a neolactoside nLc4Cer(d18:1(4E)) + GDP-beta-L-fucose = a neolactoside IV(2)-alpha-Fuc-nLc4Cer(d18:1(4E)) + GDP + H(+). It carries out the reaction a ganglioside GM1 + GDP-beta-L-fucose = a ganglioside Fuc-GM1 + GDP + H(+). It catalyses the reaction beta-D-galactosyl-(1-&gt;3)-N-acetyl-D-galactosamine + GDP-beta-L-fucose = alpha-L-fucosyl-(1-&gt;2)-beta-D-galactosyl-(1-&gt;3)-N-acetyl-D-galactosamine + GDP + H(+). Its pathway is protein modification; protein glycosylation. In terms of biological role, catalyzes the transfer of L-fucose, from a guanosine diphosphate-beta-L-fucose, to the terminal galactose residue of glycoconjugates through an alpha(1,2) linkage leading to H antigen synthesis that is an intermediate substrate in the synthesis of ABO blood group antigens. H antigen is essential for maturation of the glomerular layer of the main olfactory bulb, in cell migration and early cell-cell contacts during tumor associated angiogenesis. Preferentially fucosylates soluble lactose and to a lesser extent fucosylates glycolipids gangliosides GA1 and GM1a. The sequence is that of Galactoside alpha-(1,2)-fucosyltransferase 1 from Gorilla gorilla gorilla (Western lowland gorilla).